Consider the following 851-residue polypeptide: DNA mismatch repair protein MutS (851 aa).

614-621 is an ATP binding site; sequence GPNMGGKS.

This sequence belongs to the DNA mismatch repair MutS family.

Functionally, this protein is involved in the repair of mismatches in DNA. It is possible that it carries out the mismatch recognition step. This protein has a weak ATPase activity. The chain is DNA mismatch repair protein MutS from Yersinia enterocolitica serotype O:8 / biotype 1B (strain NCTC 13174 / 8081).